The following is a 396-amino-acid chain: MDRLLRIYNKEERLVVGLMSGTSADGIDAALVKVKGRGLDTKVELLEFEKFPYEEEVQKKIFELFDPHTGTVEKICHMNFLLGELFAEATLKLIKKAGLTPKDIDLIGSHGQTIYHIPNFIEDMGYKVRSTLQIGEPAVIAERTGIVTVADFRVRDVAAGGQGAPLVPYTEYILYRSPNETIALQNIGGIGNVTVLPKGGSIEDVIAFDTGPGNMVIDEVVKRITHGKMNFDKDGELASRGKVNEEFLAELLKDEFFKMKPPKTTGREHFGKNYVDNLMKKASYLEIDKYDLVATVTALTAYSVVRSYEKFIFPYYKVDKVVIGGGGSFNKTLVQMIKKQLPQVRVITQEDIGFNSDAKEAVAFAILASETINGNFNNIPKATGAKHPVVMGKISL.

Residue 21–28 (GTSADGID) coordinates ATP.

This sequence belongs to the anhydro-N-acetylmuramic acid kinase family.

The enzyme catalyses 1,6-anhydro-N-acetyl-beta-muramate + ATP + H2O = N-acetyl-D-muramate 6-phosphate + ADP + H(+). It participates in amino-sugar metabolism; 1,6-anhydro-N-acetylmuramate degradation. Its pathway is cell wall biogenesis; peptidoglycan recycling. In terms of biological role, catalyzes the specific phosphorylation of 1,6-anhydro-N-acetylmuramic acid (anhMurNAc) with the simultaneous cleavage of the 1,6-anhydro ring, generating MurNAc-6-P. Is required for the utilization of anhMurNAc either imported from the medium or derived from its own cell wall murein, and thus plays a role in cell wall recycling. This chain is Anhydro-N-acetylmuramic acid kinase, found in Caldanaerobacter subterraneus subsp. tengcongensis (strain DSM 15242 / JCM 11007 / NBRC 100824 / MB4) (Thermoanaerobacter tengcongensis).